A 456-amino-acid polypeptide reads, in one-letter code: Bifunctional protein GlmU (456 aa).

Positions 1–229 (MLNNTMSVVI…ISETDGVNNR (229 aa)) are pyrophosphorylase. UDP-N-acetyl-alpha-D-glucosamine contacts are provided by residues 11–14 (LAAG), K25, Q76, 81–82 (GT), 103–105 (YGD), G140, E154, N169, and N227. D105 contributes to the Mg(2+) binding site. Position 227 (N227) interacts with Mg(2+). The interval 230–250 (LQLSRLERIYQAEQAEKLLLA) is linker. The N-acetyltransferase stretch occupies residues 251–456 (GVMLRDPARF…QGWQRPVKKK (206 aa)). Residues R333 and K351 each contribute to the UDP-N-acetyl-alpha-D-glucosamine site. H363 serves as the catalytic Proton acceptor. 2 residues coordinate UDP-N-acetyl-alpha-D-glucosamine: Y366 and N377. Acetyl-CoA-binding positions include A380, 386-387 (NY), S405, A423, and R440.

In the N-terminal section; belongs to the N-acetylglucosamine-1-phosphate uridyltransferase family. This sequence in the C-terminal section; belongs to the transferase hexapeptide repeat family. As to quaternary structure, homotrimer. Mg(2+) is required as a cofactor.

It is found in the cytoplasm. The enzyme catalyses alpha-D-glucosamine 1-phosphate + acetyl-CoA = N-acetyl-alpha-D-glucosamine 1-phosphate + CoA + H(+). It catalyses the reaction N-acetyl-alpha-D-glucosamine 1-phosphate + UTP + H(+) = UDP-N-acetyl-alpha-D-glucosamine + diphosphate. It functions in the pathway nucleotide-sugar biosynthesis; UDP-N-acetyl-alpha-D-glucosamine biosynthesis; N-acetyl-alpha-D-glucosamine 1-phosphate from alpha-D-glucosamine 6-phosphate (route II): step 2/2. The protein operates within nucleotide-sugar biosynthesis; UDP-N-acetyl-alpha-D-glucosamine biosynthesis; UDP-N-acetyl-alpha-D-glucosamine from N-acetyl-alpha-D-glucosamine 1-phosphate: step 1/1. It participates in bacterial outer membrane biogenesis; LPS lipid A biosynthesis. Functionally, catalyzes the last two sequential reactions in the de novo biosynthetic pathway for UDP-N-acetylglucosamine (UDP-GlcNAc). The C-terminal domain catalyzes the transfer of acetyl group from acetyl coenzyme A to glucosamine-1-phosphate (GlcN-1-P) to produce N-acetylglucosamine-1-phosphate (GlcNAc-1-P), which is converted into UDP-GlcNAc by the transfer of uridine 5-monophosphate (from uridine 5-triphosphate), a reaction catalyzed by the N-terminal domain. This chain is Bifunctional protein GlmU, found in Enterobacter sp. (strain 638).